The chain runs to 248 residues: 4-hydroxy-tetrahydrodipicolinate reductase (248 aa).

Residues 8-13, 75-77, and 99-102 contribute to the NAD(+) site; these read GAKGRM, GTT, and ATNM. Histidine 131 functions as the Proton donor/acceptor in the catalytic mechanism. Histidine 132 contributes to the (S)-2,3,4,5-tetrahydrodipicolinate binding site. Catalysis depends on lysine 135, which acts as the Proton donor. 141-142 is a (S)-2,3,4,5-tetrahydrodipicolinate binding site; the sequence is GT.

It belongs to the DapB family.

It localises to the cytoplasm. It carries out the reaction (S)-2,3,4,5-tetrahydrodipicolinate + NAD(+) + H2O = (2S,4S)-4-hydroxy-2,3,4,5-tetrahydrodipicolinate + NADH + H(+). The catalysed reaction is (S)-2,3,4,5-tetrahydrodipicolinate + NADP(+) + H2O = (2S,4S)-4-hydroxy-2,3,4,5-tetrahydrodipicolinate + NADPH + H(+). Its pathway is amino-acid biosynthesis; L-lysine biosynthesis via DAP pathway; (S)-tetrahydrodipicolinate from L-aspartate: step 4/4. Its function is as follows. Catalyzes the conversion of 4-hydroxy-tetrahydrodipicolinate (HTPA) to tetrahydrodipicolinate. The chain is 4-hydroxy-tetrahydrodipicolinate reductase from Campylobacter jejuni subsp. doylei (strain ATCC BAA-1458 / RM4099 / 269.97).